The sequence spans 275 residues: Thiazole synthase (275 aa).

Lys108 serves as the catalytic Schiff-base intermediate with DXP. Residues Gly169, 196–197, and 218–219 contribute to the 1-deoxy-D-xylulose 5-phosphate site; these read AG and NT.

This sequence belongs to the ThiG family. Homotetramer. Forms heterodimers with either ThiH or ThiS.

The protein localises to the cytoplasm. The catalysed reaction is [ThiS sulfur-carrier protein]-C-terminal-Gly-aminoethanethioate + 2-iminoacetate + 1-deoxy-D-xylulose 5-phosphate = [ThiS sulfur-carrier protein]-C-terminal Gly-Gly + 2-[(2R,5Z)-2-carboxy-4-methylthiazol-5(2H)-ylidene]ethyl phosphate + 2 H2O + H(+). It functions in the pathway cofactor biosynthesis; thiamine diphosphate biosynthesis. Its function is as follows. Catalyzes the rearrangement of 1-deoxy-D-xylulose 5-phosphate (DXP) to produce the thiazole phosphate moiety of thiamine. Sulfur is provided by the thiocarboxylate moiety of the carrier protein ThiS. In vitro, sulfur can be provided by H(2)S. This Ralstonia nicotianae (strain ATCC BAA-1114 / GMI1000) (Ralstonia solanacearum) protein is Thiazole synthase.